The following is a 535-amino-acid chain: MNIPQEVARRRTFAIISHPDAGKTTLTEKLLLFAGAIQIAGSVKARKASRHASSDWMEIEKQRGISVASSVMQMEYRDCVINLLDTPGHQDFSEDTYRVLTAVDAALMVIDAANGVEPQTIRLLQVCRARNTPIITFINKLDREVREPLELLSEIEGHLGMDTVPFSWPVGMGKAFGGVFDIRRNRMRIFRAGQERRGEDDEFIDGLDNPEIPRRFGAAFAQASGEIELINEAAPAFDREAFLAGKQTPVFFGSAINNFGVQEVLDALVDQAPAPGPRQALEREVRPDEPKFTGVVFKVQANMDPAHRDRVAFVRVSSGRFERGMRLKVARTGKEMRPNNVVSFLSQRRELLDEAYASDVIGIPNHGVLQLGDVLTEGESLRFTGLPFFAPELFQAVEVKDPLRTKQLRVGLTQLGEEGAIQVFRPEAAGGALLLGAVGQLQFEVVAHRLKTEYGVDARMMPSRYTSARWITSDDPRALRKFMDANAAHIAYDVVDAAAFLITSPAQLRVAEDLYPNVKFHALREHGGKVFGDKA.

One can recognise a tr-type G domain in the interval 8 to 278 (ARRRTFAIIS…VDQAPAPGPR (271 aa)). Residues 17–24 (SHPDAGKT), 85–89 (DTPGH), and 139–142 (NKLD) each bind GTP.

Belongs to the TRAFAC class translation factor GTPase superfamily. Classic translation factor GTPase family. PrfC subfamily.

The protein resides in the cytoplasm. Functionally, increases the formation of ribosomal termination complexes and stimulates activities of RF-1 and RF-2. It binds guanine nucleotides and has strong preference for UGA stop codons. It may interact directly with the ribosome. The stimulation of RF-1 and RF-2 is significantly reduced by GTP and GDP, but not by GMP. In Bordetella parapertussis (strain 12822 / ATCC BAA-587 / NCTC 13253), this protein is Peptide chain release factor 3.